The following is a 343-amino-acid chain: Holliday junction branch migration complex subunit RuvB (343 aa).

Residues 1–26 (MKEKILTFSSDPSSPVTRHETEEDTG) are disordered. The large ATPase domain (RuvB-L) stretch occupies residues 3-193 (EKILTFSSDP…FGIFRKFDFY (191 aa)). The segment covering 7 to 16 (TFSSDPSSPV) has biased composition (polar residues). ATP is bound by residues L32, R33, G74, K77, T78, T79, 140-142 (EDF), R183, Y193, and R230. Residue T78 participates in Mg(2+) binding. The interval 194–264 (SRQDLARIVS…AIDDALALEG (71 aa)) is small ATPAse domain (RuvB-S). A head domain (RuvB-H) region spans residues 267–343 (EKGLTGLDRS…YRHLGVQWRG (77 aa)). The DNA site is built by R322 and R327.

The protein belongs to the RuvB family. Homohexamer. Forms an RuvA(8)-RuvB(12)-Holliday junction (HJ) complex. HJ DNA is sandwiched between 2 RuvA tetramers; dsDNA enters through RuvA and exits via RuvB. An RuvB hexamer assembles on each DNA strand where it exits the tetramer. Each RuvB hexamer is contacted by two RuvA subunits (via domain III) on 2 adjacent RuvB subunits; this complex drives branch migration. In the full resolvosome a probable DNA-RuvA(4)-RuvB(12)-RuvC(2) complex forms which resolves the HJ.

It localises to the cytoplasm. It catalyses the reaction ATP + H2O = ADP + phosphate + H(+). The RuvA-RuvB-RuvC complex processes Holliday junction (HJ) DNA during genetic recombination and DNA repair, while the RuvA-RuvB complex plays an important role in the rescue of blocked DNA replication forks via replication fork reversal (RFR). RuvA specifically binds to HJ cruciform DNA, conferring on it an open structure. The RuvB hexamer acts as an ATP-dependent pump, pulling dsDNA into and through the RuvAB complex. RuvB forms 2 homohexamers on either side of HJ DNA bound by 1 or 2 RuvA tetramers; 4 subunits per hexamer contact DNA at a time. Coordinated motions by a converter formed by DNA-disengaged RuvB subunits stimulates ATP hydrolysis and nucleotide exchange. Immobilization of the converter enables RuvB to convert the ATP-contained energy into a lever motion, pulling 2 nucleotides of DNA out of the RuvA tetramer per ATP hydrolyzed, thus driving DNA branch migration. The RuvB motors rotate together with the DNA substrate, which together with the progressing nucleotide cycle form the mechanistic basis for DNA recombination by continuous HJ branch migration. Branch migration allows RuvC to scan DNA until it finds its consensus sequence, where it cleaves and resolves cruciform DNA. This is Holliday junction branch migration complex subunit RuvB from Desulfosudis oleivorans (strain DSM 6200 / JCM 39069 / Hxd3) (Desulfococcus oleovorans).